A 138-amino-acid polypeptide reads, in one-letter code: uncharacterized protein (138 aa).

A helical membrane pass occupies residues Ile11–Tyr33.

The protein resides in the membrane. This is an uncharacterized protein from Aquifex aeolicus (strain VF5).